The following is a 152-amino-acid chain: Large ribosomal subunit protein bL9 (152 aa).

Belongs to the bacterial ribosomal protein bL9 family.

Functionally, binds to the 23S rRNA. This Synechococcus sp. (strain CC9605) protein is Large ribosomal subunit protein bL9.